Here is a 313-residue protein sequence, read N- to C-terminus: Protein FixB (313 aa).

FAD is bound at residue 255–283 (LYLAVGISGQIQHMVGANASQTIFAINKD).

It belongs to the ETF alpha-subunit/FixB family. As to quaternary structure, heterodimer of FixA and FixB.

Its pathway is amine and polyamine metabolism; carnitine metabolism. Its function is as follows. Required for anaerobic carnitine reduction. May bring reductant to CaiA. The sequence is that of Protein FixB from Escherichia coli O1:K1 / APEC.